The sequence spans 239 residues: uncharacterized protein (239 aa).

The interval 129–155 is disordered; it reads DSLDDEDDNMISSNDPTKSPEEHDTTT. At serine 160 the chain carries Phosphoserine.

This is an uncharacterized protein from Schizosaccharomyces pombe (strain 972 / ATCC 24843) (Fission yeast).